A 518-amino-acid polypeptide reads, in one-letter code: Xylose import ATP-binding protein XylG (518 aa).

ABC transporter domains follow at residues 6 to 245 and 262 to 507; these read LQMN…VGRE and FEAR…LSQP. 38–45 provides a ligand contact to ATP; it reads GENGAGKS.

It belongs to the ABC transporter superfamily. Xylose importer (TC 3.A.1.2.4) family. In terms of assembly, the complex is composed of two ATP-binding proteins (XylG), two transmembrane proteins (XylH) and a solute-binding protein (XylF).

The protein localises to the cell inner membrane. The enzyme catalyses D-xylose(out) + ATP + H2O = D-xylose(in) + ADP + phosphate + H(+). Part of the ABC transporter complex XylFGH involved in xylose import. Responsible for energy coupling to the transport system. This Pseudomonas fluorescens (strain Pf0-1) protein is Xylose import ATP-binding protein XylG.